A 209-amino-acid polypeptide reads, in one-letter code: Probable GTP-binding protein EngB (209 aa).

The EngB-type G domain maps to 22–198 (TPLEIAFVGR…NRTVGSWLDA (177 aa)). Positions 37 and 59 each coordinate Mg(2+).

Belongs to the TRAFAC class TrmE-Era-EngA-EngB-Septin-like GTPase superfamily. EngB GTPase family. Requires Mg(2+) as cofactor.

In terms of biological role, necessary for normal cell division and for the maintenance of normal septation. The sequence is that of Probable GTP-binding protein EngB from Neisseria meningitidis serogroup B (strain ATCC BAA-335 / MC58).